Reading from the N-terminus, the 444-residue chain is Maintenance of mitochondrial morphology protein 1 (444 aa).

The Lumenal segment spans residues 1-110; it reads MNNLDNLAGN…SFSGWSFIEG (110 aa). Residues 111–131 form a helical membrane-spanning segment; that stretch reads FIIGQFSVIIVLIFFIKFFVF. Over 132–444 the chain is Cytoplasmic; sequence SDGSSSNSSN…TDDVPLSKAE (313 aa). Positions 207 to 419 constitute an SMP-LTD domain; that stretch reads PSESLDWFNV…EPRFQCIRLP (213 aa).

Belongs to the MMM1 family. As to quaternary structure, homodimer. Component of the ER-mitochondria encounter structure (ERMES) or MDM complex, composed of MMM1, MDM10, MDM12 and MDM34. An MMM1 homodimer associates with one molecule of MDM12 on each side in a pairwise head-to-tail manner, and the SMP-LTD domains of MMM1 and MDM12 generate a continuous hydrophobic tunnel for phospholipid trafficking.

The protein localises to the endoplasmic reticulum membrane. In terms of biological role, component of the ERMES/MDM complex, which serves as a molecular tether to connect the endoplasmic reticulum (ER) and mitochondria. Components of this complex are involved in the control of mitochondrial shape and protein biogenesis, and function in nonvesicular lipid trafficking between the ER and mitochondria. The MDM12-MMM1 subcomplex functions in the major beta-barrel assembly pathway that is responsible for biogenesis of all outer membrane beta-barrel proteins, and acts in a late step after the SAM complex. The MDM10-MDM12-MMM1 subcomplex further acts in the TOM40-specific pathway after the action of the MDM12-MMM1 complex. Essential for establishing and maintaining the structure of mitochondria and maintenance of mtDNA nucleoids. The chain is Maintenance of mitochondrial morphology protein 1 from Vanderwaltozyma polyspora (strain ATCC 22028 / DSM 70294 / BCRC 21397 / CBS 2163 / NBRC 10782 / NRRL Y-8283 / UCD 57-17) (Kluyveromyces polysporus).